A 162-amino-acid chain; its full sequence is NADH-quinone oxidoreductase subunit I 2 (162 aa).

4Fe-4S ferredoxin-type domains lie at 52–82 and 93–122; these read LRRY…IEAG and ERYD…EGPN. [4Fe-4S] cluster is bound by residues C62, C65, C68, C72, C102, C105, C108, and C112.

Belongs to the complex I 23 kDa subunit family. NDH-1 is composed of 14 different subunits. Subunits NuoA, H, J, K, L, M, N constitute the membrane sector of the complex. [4Fe-4S] cluster serves as cofactor.

It localises to the cell inner membrane. It carries out the reaction a quinone + NADH + 5 H(+)(in) = a quinol + NAD(+) + 4 H(+)(out). NDH-1 shuttles electrons from NADH, via FMN and iron-sulfur (Fe-S) centers, to quinones in the respiratory chain. The immediate electron acceptor for the enzyme in this species is believed to be ubiquinone. Couples the redox reaction to proton translocation (for every two electrons transferred, four hydrogen ions are translocated across the cytoplasmic membrane), and thus conserves the redox energy in a proton gradient. This Rhodopseudomonas palustris (strain BisA53) protein is NADH-quinone oxidoreductase subunit I 2.